The following is a 398-amino-acid chain: MTTTDPVANLAALIRCPSVTPAEGGALSLLDTLLSPLGFAVERVMATEDGTPDVENLYARLGTEGPHLMFAGHTDVVPVGDEAAWSHPPFSADIAGGEMYGRGAVDMKGGIACFVAAIARHIGKHGKPQGSVSFLITGDEEGPSINGTSKLLEWAAAKGETWDACVVGEPTNPDQLGDMIKIGRRGSLSGRITVQGVQGHAAYPHLADNPIRGLLQLTHALMHPAFDHGTDDFQPSNLEVTTVDTGNAATNVIPARATAAFNIRFNDSWTAESLRAEIIRRLDAAANEGELRPDRAPVKYEIVWADRPSHVFLTRNNALISSLSGAIETVTGKEPKLSTTGGTSDARFIKDYCPVVEFGLVGQTMHMVDERVAVADLETLTRIYETFIERWFAHADGK.

Zn(2+) is bound at residue H73. D75 is an active-site residue. D106 contributes to the Zn(2+) binding site. E140 (proton acceptor) is an active-site residue. Zn(2+) is bound by residues E141, E169, and H366.

This sequence belongs to the peptidase M20A family. DapE subfamily. As to quaternary structure, homodimer. Requires Zn(2+) as cofactor. Co(2+) serves as cofactor.

It carries out the reaction N-succinyl-(2S,6S)-2,6-diaminopimelate + H2O = (2S,6S)-2,6-diaminopimelate + succinate. The protein operates within amino-acid biosynthesis; L-lysine biosynthesis via DAP pathway; LL-2,6-diaminopimelate from (S)-tetrahydrodipicolinate (succinylase route): step 3/3. Catalyzes the hydrolysis of N-succinyl-L,L-diaminopimelic acid (SDAP), forming succinate and LL-2,6-diaminopimelate (DAP), an intermediate involved in the bacterial biosynthesis of lysine and meso-diaminopimelic acid, an essential component of bacterial cell walls. The chain is Succinyl-diaminopimelate desuccinylase from Agrobacterium fabrum (strain C58 / ATCC 33970) (Agrobacterium tumefaciens (strain C58)).